A 265-amino-acid polypeptide reads, in one-letter code: Signal peptidase I (265 aa).

Residues 1 to 19 lie on the Cytoplasmic side of the membrane; that stretch reads MQIDTKTNTNKTTAQEWKS. The chain crosses the membrane as a helical span at residues 20–40; sequence FAFVVCIALLIRILIMEPFTV. Residues 41-265 lie on the Periplasmic side of the membrane; sequence PTGSMKATIL…IFRNLYNTDE (225 aa). Catalysis depends on residues serine 44 and lysine 107.

The protein belongs to the peptidase S26 family.

It is found in the cell inner membrane. The enzyme catalyses Cleavage of hydrophobic, N-terminal signal or leader sequences from secreted and periplasmic proteins.. The protein is Signal peptidase I (lepB) of Rickettsia canadensis (strain McKiel).